A 587-amino-acid polypeptide reads, in one-letter code: Pescadillo homolog (587 aa).

The stretch at 267–306 (LKKKEEKNDEEGKNLSKKELNKAIKADQEQQENDEQDNNN) forms a coiled coil. Residues 290-311 (IKADQEQQENDEQDNNNGESVE) form a disordered region. A compositionally biased stretch (acidic residues) spans 295-311 (EQQENDEQDNNNGESVE). The BRCT domain maps to 335–434 (STAELFSKFI…ELINVNEYAA (100 aa)). Residues 437-587 (TLPPHLSPWG…KKKEQLKKLN (151 aa)) form a disordered region. A compositionally biased stretch (acidic residues) spans 459–494 (KEDGEAEEDTDEEEEEVEIEDGDEDQEDEEEEEDED). Positions 470-587 (EEEEEVEIED…KKKEQLKKLN (118 aa)) form a coiled coil. Composition is skewed to basic and acidic residues over residues 529 to 541 (SNKE…ELKK), 559 to 569 (IEKKENREKQL), and 578 to 587 (KKKEQLKKLN).

The protein belongs to the pescadillo family. As to quaternary structure, component of the NOP7 complex, composed of ERB1, NOP7 and YTM1. The complex is held together by ERB1, which interacts with NOP7 via its N-terminal domain and with YTM1 via a high-affinity interaction between the seven-bladed beta-propeller domains of the 2 proteins. The NOP7 complex associates with the 66S pre-ribosome.

It is found in the nucleus. The protein localises to the nucleolus. It localises to the nucleoplasm. Functionally, component of the NOP7 complex, which is required for maturation of the 25S and 5.8S ribosomal RNAs and formation of the 60S ribosome. Required for the transition from hyphal to yeast growth. This chain is Pescadillo homolog, found in Candida albicans (strain SC5314 / ATCC MYA-2876) (Yeast).